The chain runs to 428 residues: Cell division cycle 20.6, cofactor of APC complex (428 aa).

WD repeat units lie at residues 106 to 145 (WFLT…TSKL), 150 to 189 (DENG…HVRT), 193 to 230 (GHES…SIIG), 234 to 273 (GHTE…SNPT), 282 to 324 (EHTA…CLNS), 326 to 367 (ETGS…KMAE), and 370 to 409 (GHTS…PKTT).

This sequence belongs to the WD repeat CDC20/Fizzy family. The APC/C is composed of at least 11 subunits that stay tightly associated throughout the cell cycle.

It is found in the nucleus. It functions in the pathway protein modification; protein ubiquitination. Component of the anaphase promoting complex/cyclosome (APC/C), a cell cycle-regulated E3 ubiquitin-protein ligase complex that controls progression through mitosis and the G1 phase of the cell cycle. This is Cell division cycle 20.6, cofactor of APC complex (CDC20-6) from Arabidopsis thaliana (Mouse-ear cress).